The following is a 609-amino-acid chain: 2',5'-phosphodiesterase 12 (609 aa).

The transit peptide at 1-42 (MWRLPGARAALRVIRTAVEKLSRAEAGSQTAAGAMERAVVRC) directs the protein to the mitochondrion. Residues 89-99 (AAAAKKSRKSR) show a composition bias toward basic residues. Disordered stretches follow at residues 89-111 (AAAA…CSGP) and 206-230 (AEPE…ETDV). 2 stretches are compositionally biased toward low complexity: residues 100–111 (PNASGGAACSGP) and 213–224 (PSSLSPSSPSSS). At Ser217 the chain carries Phosphoserine. Residues Glu351, Asp496, and Asn498 each contribute to the Mg(2+) site. Asp496 functions as the Proton donor/acceptor in the catalytic mechanism.

The protein belongs to the CCR4/nocturin family. The cofactor is Mg(2+). Ubiquitous.

The protein resides in the mitochondrion matrix. The catalysed reaction is Exonucleolytic cleavage of poly(A) to 5'-AMP.. Enzyme that cleaves 2',5'-phosphodiester bond linking adenosines of the 5'-triphosphorylated oligoadenylates, triphosphorylated oligoadenylates referred as 2-5A modulates the 2-5A system. Degrades triphosphorylated 2-5A to produce AMP and ATP. Also cleaves 3',5'-phosphodiester bond of oligoadenylates. Plays a role as a negative regulator of the 2-5A system that is one of the major pathways for antiviral and antitumor functions induced by interferons (IFNs). Suppression of this enzyme increases cellular 2-5A levels and decreases viral replication in cultured small-airway epithelial cells and Hela cells. This Homo sapiens (Human) protein is 2',5'-phosphodiesterase 12 (PDE12).